A 66-amino-acid polypeptide reads, in one-letter code: Toxin Os1 (66 aa).

The region spanning 2-66 is the LCN-type CS-alpha/beta domain; it reads RDGYIVQLHN…PIKWLDPKCY (65 aa). 4 cysteine pairs are disulfide-bonded: Cys12–Cys65, Cys16–Cys37, Cys22–Cys47, and Cys26–Cys49.

The protein belongs to the long (4 C-C) scorpion toxin superfamily. Sodium channel inhibitor family. Alpha subfamily. As to expression, expressed by the venom gland.

The protein resides in the secreted. Its function is as follows. Alpha toxins bind voltage-independently at site-3 of sodium channels (Nav) and inhibit the inactivation of the activated channels, thereby blocking neuronal transmission. This toxin possesses a high paralytic activity against mice. In Orthochirus scrobiculosus (Central Asian scorpion), this protein is Toxin Os1.